The following is a 424-amino-acid chain: Histidine--tRNA ligase (424 aa).

This sequence belongs to the class-II aminoacyl-tRNA synthetase family. As to quaternary structure, homodimer.

Its subcellular location is the cytoplasm. It carries out the reaction tRNA(His) + L-histidine + ATP = L-histidyl-tRNA(His) + AMP + diphosphate + H(+). The polypeptide is Histidine--tRNA ligase (Shewanella piezotolerans (strain WP3 / JCM 13877)).